A 537-amino-acid polypeptide reads, in one-letter code: Protoporphyrinogen oxidase 1, chloroplastic (537 aa).

The N-terminal 34 residues, 1-34 (MELSLLRPTTQSLLPSFSKPNLRLNVYKPLRLRC), are a transit peptide targeting the chloroplast. Ser-35 is subject to N-acetylserine. FAD contacts are provided by residues 63 to 68 (GGGISG), 90 to 91 (EA), and 112 to 115 (GPNS). A compositionally biased stretch (basic and acidic residues) spans 256–268 (RKNAPKAERDPRL). The tract at residues 256–275 (RKNAPKAERDPRLPKPQGQT) is disordered. Position 511–513 (511–513 (VAL)) interacts with FAD.

The protein belongs to the protoporphyrinogen/coproporphyrinogen oxidase family. Protoporphyrinogen oxidase subfamily. The cofactor is FAD. Expressed at high levels in the leaves and at low levels in the roots and floral buds.

The protein localises to the plastid. Its subcellular location is the chloroplast. It catalyses the reaction protoporphyrinogen IX + 3 O2 = protoporphyrin IX + 3 H2O2. Its pathway is porphyrin-containing compound metabolism; protoporphyrin-IX biosynthesis; protoporphyrin-IX from protoporphyrinogen-IX: step 1/1. It participates in porphyrin-containing compound metabolism; chlorophyll biosynthesis. With respect to regulation, inhibited by acifluorfen. In terms of biological role, catalyzes the 6-electron oxidation of protoporphyrinogen-IX to form protoporphyrin-IX. This chain is Protoporphyrinogen oxidase 1, chloroplastic (PPOX1), found in Arabidopsis thaliana (Mouse-ear cress).